Consider the following 461-residue polypeptide: Asparagine--tRNA ligase (461 aa).

The protein belongs to the class-II aminoacyl-tRNA synthetase family. Homodimer.

The protein localises to the cytoplasm. The catalysed reaction is tRNA(Asn) + L-asparagine + ATP = L-asparaginyl-tRNA(Asn) + AMP + diphosphate + H(+). This is Asparagine--tRNA ligase from Nitratidesulfovibrio vulgaris (strain DP4) (Desulfovibrio vulgaris).